A 287-amino-acid polypeptide reads, in one-letter code: (S)-phenoxypropionate/alpha-ketoglutarate-dioxygenase (287 aa).

H102 and D104 together coordinate Fe cation. 2 residues coordinate 2-oxoglutarate: T129 and W242. H257 is a Fe cation binding site. Residue R268 participates in 2-oxoglutarate binding.

It belongs to the TfdA dioxygenase family. In terms of assembly, monomer. It depends on Fe cation as a cofactor. L-ascorbate serves as cofactor.

The catalysed reaction is (S)-2-(4-chloro-2-methylphenoxy)propanoate + 2-oxoglutarate + O2 = 2-methyl-4-chlorophenol + pyruvate + succinate + CO2. It catalyses the reaction (S)-(2,4-dichlorophenoxy)propanoate + 2-oxoglutarate + O2 = 2,4-dichlorophenol + pyruvate + succinate + CO2. It functions in the pathway xenobiotic degradation; 2-(2,4-dichlorophenoxy)propanoate degradation. Its function is as follows. Involved in the degradation of the phenoxypropionate herbicides. Catalyzes the enantiospecific cleavage of the ether bond in the herbicid S-dichlorprop ((S)-2-(2,4-dichlorophenoxy)propionate)(S-2,4-DP) and S-mecoprop ((S)-2-(4-chloro-2-methylphenoxy)propionate)(S-2,4-MCPP). It can also accept (RS)-2-(4-chloro-2-methylphenoxy)propionate ((RS)-2,4-MCPP) and phenoxyacetate derivatives such as 2,4-dichlorophenoxyacetate (2,4-D), however it can only accept 2-oxoglutarate as oxygen acceptor. The chain is (S)-phenoxypropionate/alpha-ketoglutarate-dioxygenase from Sphingobium herbicidovorans (strain ATCC 700291 / DSM 11019 / CCUG 56400 / KCTC 2939 / LMG 18315 / NBRC 16415 / MH) (Sphingomonas herbicidovorans).